We begin with the raw amino-acid sequence, 407 residues long: Na(+)-translocating NADH-quinone reductase subunit F (407 aa).

The helical transmembrane segment at 6-26 (IFLAIGMFTAIVLGLVAIILV) threads the bilayer. The region spanning 35–127 (GDVTIQINGE…DMQIRVPEEV (93 aa)) is the 2Fe-2S ferredoxin-type domain. Positions 70, 76, 79, and 111 each coordinate [2Fe-2S] cluster. The region spanning 130-269 (VKKWECTVES…YGPFGEFFAK (140 aa)) is the FAD-binding FR-type domain. Residues 272–389 (EAEMVFIGGG…PMMNAAVIKM (118 aa)) form a catalytic region.

It belongs to the NqrF family. As to quaternary structure, composed of six subunits; NqrA, NqrB, NqrC, NqrD, NqrE and NqrF. It depends on [2Fe-2S] cluster as a cofactor. FAD is required as a cofactor.

The protein localises to the cell inner membrane. It carries out the reaction a ubiquinone + n Na(+)(in) + NADH + H(+) = a ubiquinol + n Na(+)(out) + NAD(+). NQR complex catalyzes the reduction of ubiquinone-1 to ubiquinol by two successive reactions, coupled with the transport of Na(+) ions from the cytoplasm to the periplasm. The first step is catalyzed by NqrF, which accepts electrons from NADH and reduces ubiquinone-1 to ubisemiquinone by a one-electron transfer pathway. The chain is Na(+)-translocating NADH-quinone reductase subunit F from Pseudomonas aeruginosa (strain ATCC 15692 / DSM 22644 / CIP 104116 / JCM 14847 / LMG 12228 / 1C / PRS 101 / PAO1).